A 278-amino-acid chain; its full sequence is HTH-type transcriptional activator RhaS (278 aa).

The region spanning 174–272 (NQLMAWLEEH…NWSPRDIRQG (99 aa)) is the HTH araC/xylS-type domain. DNA-binding regions (H-T-H motif) lie at residues 191-212 (EAVA…KQHT) and 239-262 (VTEI…RREF).

Binds DNA as a dimer.

Its subcellular location is the cytoplasm. Its function is as follows. Activates expression of the rhaBAD and rhaT operons. The sequence is that of HTH-type transcriptional activator RhaS from Salmonella schwarzengrund (strain CVM19633).